Here is a 379-residue protein sequence, read N- to C-terminus: DnaJ homolog subfamily B member 14 (379 aa).

Topologically, residues 1 to 244 (MEGNRDEAEK…GHEREEERGD (244 aa)) are cytoplasmic. The interval 55 to 94 (STAGNSPHCRKPSGGGDQSKPNCTKDSSSGSGESGKGYTK) is disordered. The region spanning 108 to 172 (NYYEVLGVTK…EKRKQYDLTG (65 aa)) is the J domain. The interval 221–241 (GRAGYSNQHQHRHSGHEREEE) is disordered. Residues 245–265 (GGFSVFIQLMPIIVLILVSLL) form a helical membrane-spanning segment. At 266-379 (SQLMVSNPPY…ERLTSIYKGG (114 aa)) the chain is on the lumenal side.

It belongs to the DnaJ family. DNAJB12/DNAJB14 subfamily. Interacts (via J domain) with HSPA8/Hsc70. Forms a multiprotein complex, at least composed of DNAJB12, DNAJB14, HSPA8/Hsc70 and SGTA; interaction with DNAJB14 and HSPA8/Hsc70 is direct.

Its subcellular location is the endoplasmic reticulum membrane. The protein localises to the nucleus membrane. Functionally, acts as a co-chaperone with HSPA8/Hsc70; required to promote protein folding and trafficking, prevent aggregation of client proteins, and promote unfolded proteins to endoplasmic reticulum-associated degradation (ERAD) pathway. Acts by determining HSPA8/Hsc70's ATPase and polypeptide-binding activities. Can also act independently of HSPA8/Hsc70: together with DNAJB12, acts as a chaperone that promotes maturation of potassium channels KCND2 and KCNH2 by stabilizing nascent channel subunits and assembling them into tetramers. While stabilization of nascent channel proteins is dependent on HSPA8/Hsc70, the process of oligomerization of channel subunits is independent of HSPA8/Hsc70. When overexpressed, forms membranous structures together with DNAJB12 and HSPA8/Hsc70 within the nucleus; the role of these structures, named DJANGOs, is still unclear. The sequence is that of DnaJ homolog subfamily B member 14 (DNAJB14) from Bos taurus (Bovine).